We begin with the raw amino-acid sequence, 424 residues long: Methylenetetrahydrofolate--tRNA-(uracil-5-)-methyltransferase TrmFO 1 (424 aa).

8 to 13 (GAGLSG) serves as a coordination point for FAD.

This sequence belongs to the MnmG family. TrmFO subfamily. The cofactor is FAD.

It localises to the cytoplasm. It carries out the reaction uridine(54) in tRNA + (6R)-5,10-methylene-5,6,7,8-tetrahydrofolate + NADH + H(+) = 5-methyluridine(54) in tRNA + (6S)-5,6,7,8-tetrahydrofolate + NAD(+). The enzyme catalyses uridine(54) in tRNA + (6R)-5,10-methylene-5,6,7,8-tetrahydrofolate + NADPH + H(+) = 5-methyluridine(54) in tRNA + (6S)-5,6,7,8-tetrahydrofolate + NADP(+). Functionally, catalyzes the folate-dependent formation of 5-methyl-uridine at position 54 (M-5-U54) in all tRNAs. This Mycoplasma mycoides subsp. mycoides SC (strain CCUG 32753 / NCTC 10114 / PG1) protein is Methylenetetrahydrofolate--tRNA-(uracil-5-)-methyltransferase TrmFO 1.